The chain runs to 285 residues: 4-diphosphocytidyl-2-C-methyl-D-erythritol kinase (285 aa).

Lysine 9 is an active-site residue. 89–99 (PLGAGLGGGSS) contributes to the ATP binding site. The active site involves aspartate 131.

Belongs to the GHMP kinase family. IspE subfamily.

It carries out the reaction 4-CDP-2-C-methyl-D-erythritol + ATP = 4-CDP-2-C-methyl-D-erythritol 2-phosphate + ADP + H(+). It functions in the pathway isoprenoid biosynthesis; isopentenyl diphosphate biosynthesis via DXP pathway; isopentenyl diphosphate from 1-deoxy-D-xylulose 5-phosphate: step 3/6. In terms of biological role, catalyzes the phosphorylation of the position 2 hydroxy group of 4-diphosphocytidyl-2C-methyl-D-erythritol. This chain is 4-diphosphocytidyl-2-C-methyl-D-erythritol kinase, found in Thermodesulfovibrio yellowstonii (strain ATCC 51303 / DSM 11347 / YP87).